The sequence spans 362 residues: 3-dehydroquinate synthase (362 aa).

Residues 72–77 (DGEQYK), 106–110 (GVVGD), 130–131 (TT), Lys-143, Lys-152, and 170–173 (CLKT) contribute to the NAD(+) site. Residues Glu-185, His-248, and His-265 each coordinate Zn(2+).

It belongs to the sugar phosphate cyclases superfamily. Dehydroquinate synthase family. It depends on Co(2+) as a cofactor. The cofactor is Zn(2+). Requires NAD(+) as cofactor.

The protein resides in the cytoplasm. It carries out the reaction 7-phospho-2-dehydro-3-deoxy-D-arabino-heptonate = 3-dehydroquinate + phosphate. Its pathway is metabolic intermediate biosynthesis; chorismate biosynthesis; chorismate from D-erythrose 4-phosphate and phosphoenolpyruvate: step 2/7. Functionally, catalyzes the conversion of 3-deoxy-D-arabino-heptulosonate 7-phosphate (DAHP) to dehydroquinate (DHQ). The protein is 3-dehydroquinate synthase of Aliivibrio fischeri (strain ATCC 700601 / ES114) (Vibrio fischeri).